The primary structure comprises 535 residues: Isoleucine N-monooxygenase 1 (535 aa).

Residues 1–8 are Cytoplasmic-facing; sequence MGLMPDFL. Residues 9–29 form a helical; Signal-anchor for type II membrane protein membrane-spanning segment; that stretch reads SLCHEFPWTFLLVVIFSFMIF. The Lumenal portion of the chain corresponds to 30–535; it reads KVTKTHLVNK…AAELYRTNEI (506 aa). N-linked (GlcNAc...) asparagine glycans are attached at residues asparagine 38, asparagine 232, and asparagine 404. Cysteine 470 contributes to the heme binding site.

This sequence belongs to the cytochrome P450 family. Heme serves as cofactor. Exclusively expressed in aerial parts. Highest expression in the apical leaves. Also detected in the second leaf from the top and in the stem. Not expressed in older leaves or roots.

Its subcellular location is the microsome membrane. It carries out the reaction L-isoleucine + 2 reduced [NADPH--hemoprotein reductase] + 2 O2 = (1E,2S)-2-methylbutanal oxime + 2 oxidized [NADPH--hemoprotein reductase] + CO2 + 3 H2O + 2 H(+). The enzyme catalyses L-isoleucine + reduced [NADPH--hemoprotein reductase] + O2 = N-hydroxy-L-isoleucine + oxidized [NADPH--hemoprotein reductase] + H2O + 2 H(+). It catalyses the reaction N-hydroxy-L-isoleucine + reduced [NADPH--hemoprotein reductase] + O2 = N,N-dihydroxy-L-isoleucine + oxidized [NADPH--hemoprotein reductase] + H2O + H(+). The catalysed reaction is L-valine + 2 reduced [NADPH--hemoprotein reductase] + 2 O2 = (E)-2-methylpropanal oxime + 2 oxidized [NADPH--hemoprotein reductase] + CO2 + 3 H2O + 2 H(+). It carries out the reaction L-valine + reduced [NADPH--hemoprotein reductase] + O2 = N-hydroxy-L-valine + oxidized [NADPH--hemoprotein reductase] + H2O + 2 H(+). The enzyme catalyses N-hydroxy-L-valine + reduced [NADPH--hemoprotein reductase] + O2 = N,N-dihydroxy-L-valine + oxidized [NADPH--hemoprotein reductase] + H2O + H(+). Its pathway is secondary metabolite biosynthesis. Involved in the biosynthesis of the cyanogenic glucosides linamarin and lotaustralin and of the nitirle glucosides rhodiocyanoside A and D. Can use L-isoleucine &gt; L-valine as substrate, but not L-leucine, L-phenylalanine or L-tyrosine. Catalyzes multi-step reactions starting with two successive N-hydroxylations using L-isoleucine and, to a lower extent, L-valine as substrates leading to the formation of N,N-dihydroxy-L-valine and N,N-dihydroxy-L-isoleucine, respectively; following spontaneous reactions lead to the production of (E)-2-methylpropanal oxime and (1E,2S)-2-methylbutanal oxime, respectively. In Lotus japonicus (Lotus corniculatus var. japonicus), this protein is Isoleucine N-monooxygenase 1.